Reading from the N-terminus, the 687-residue chain is Glycine--tRNA ligase beta subunit (687 aa).

The protein belongs to the class-II aminoacyl-tRNA synthetase family. In terms of assembly, tetramer of two alpha and two beta subunits.

The protein localises to the cytoplasm. It carries out the reaction tRNA(Gly) + glycine + ATP = glycyl-tRNA(Gly) + AMP + diphosphate. The chain is Glycine--tRNA ligase beta subunit from Lactobacillus helveticus (strain DPC 4571).